The primary structure comprises 68 residues: Peptide TsPep3 (68 aa).

A signal peptide spans 1 to 26 (MKLSCGFLLIFLVLSAMIATFSEVEA). 4 cysteine pairs are disulfide-bonded: Cys30-Cys38, Cys33-Cys54, Cys37-Cys47, and Cys42-Cys52. The propeptide occupies 56–68 (GRSDLNEEFENYQ).

In terms of tissue distribution, expressed by the venom gland.

The protein resides in the secreted. In terms of biological role, probable weak potassium channel blocker. The sequence is that of Peptide TsPep3 from Tityus serrulatus (Brazilian scorpion).